Here is a 271-residue protein sequence, read N- to C-terminus: 2,3,4,5-tetrahydropyridine-2,6-dicarboxylate N-succinyltransferase (271 aa).

2 residues coordinate substrate: Arg-103 and Asp-140.

This sequence belongs to the transferase hexapeptide repeat family. As to quaternary structure, homotrimer.

The protein localises to the cytoplasm. It carries out the reaction (S)-2,3,4,5-tetrahydrodipicolinate + succinyl-CoA + H2O = (S)-2-succinylamino-6-oxoheptanedioate + CoA. It functions in the pathway amino-acid biosynthesis; L-lysine biosynthesis via DAP pathway; LL-2,6-diaminopimelate from (S)-tetrahydrodipicolinate (succinylase route): step 1/3. In Methylococcus capsulatus (strain ATCC 33009 / NCIMB 11132 / Bath), this protein is 2,3,4,5-tetrahydropyridine-2,6-dicarboxylate N-succinyltransferase.